Reading from the N-terminus, the 508-residue chain is ADP-ribosylarginine hydrolase CG3568 (508 aa).

ADP-D-ribose is bound by residues R209, G349, G351, G353, V354, W355, W390, D441, N448, E449, G459, and D460.

The enzyme catalyses N(omega)-(ADP-D-ribosyl)-L-arginyl-[protein] + H2O = ADP-D-ribose + L-arginyl-[protein]. It carries out the reaction N(omega)-(ADP-D-ribosyl)-L-arginine + H2O = ADP-D-ribose + L-arginine. Functionally, protein ADP-ribosyl hydrolase that specifically removes mono-ADP-ribosyl modifications from protein arginine residues. In Drosophila melanogaster (Fruit fly), this protein is ADP-ribosylarginine hydrolase CG3568.